The following is a 210-amino-acid chain: Protein GrpE (210 aa).

The interval 1–42 (MANEERTIPETNVASERPEDPVESQTRAEGGEQIQEAAPETA) is disordered.

The protein belongs to the GrpE family. As to quaternary structure, homodimer.

The protein resides in the cytoplasm. Participates actively in the response to hyperosmotic and heat shock by preventing the aggregation of stress-denatured proteins, in association with DnaK and GrpE. It is the nucleotide exchange factor for DnaK and may function as a thermosensor. Unfolded proteins bind initially to DnaJ; upon interaction with the DnaJ-bound protein, DnaK hydrolyzes its bound ATP, resulting in the formation of a stable complex. GrpE releases ADP from DnaK; ATP binding to DnaK triggers the release of the substrate protein, thus completing the reaction cycle. Several rounds of ATP-dependent interactions between DnaJ, DnaK and GrpE are required for fully efficient folding. In Nitrosococcus oceani (strain ATCC 19707 / BCRC 17464 / JCM 30415 / NCIMB 11848 / C-107), this protein is Protein GrpE.